The chain runs to 572 residues: Fatty acid amide hydrolase 1 (572 aa).

Residues 1 to 14 form the signal peptide; that stretch reads MIFYLVLLVLGAIA. Residues 32-63 adopt a coiled-coil conformation; that stretch reads IVAQRRRDDLSKNVEQARKAADKLDTQRRDWI. Active-site charge relay system residues include Lys139 and Ser214. Substrate is bound by residues Ser214 and 235 to 238; that span reads VGGS. The Acyl-ester intermediate role is filled by Ser238.

Belongs to the amidase family. As to expression, expressed in the pharynx, some pharyngeal neurons, the posterior intestine and anal depressor muscles.

It catalyses the reaction N-(5Z,8Z,11Z,14Z-eicosatetraenoyl)-ethanolamine + H2O = ethanolamine + (5Z,8Z,11Z,14Z)-eicosatetraenoate. It carries out the reaction (9Z)-octadecenamide + H2O = (9Z)-octadecenoate + NH4(+). The enzyme catalyses (5Z,8Z,11Z,14Z,17Z-eicosapentaenoyl) ethanolamine + H2O = (5Z,8Z,11Z,14Z,17Z)-eicosapentaenoate + ethanolamine. The catalysed reaction is N-(9Z-hexadecenoyl) ethanolamine + H2O = (9Z)-hexadecenoate + ethanolamine. It catalyses the reaction N-(9Z-octadecenoyl) ethanolamine + H2O = ethanolamine + (9Z)-octadecenoate. It carries out the reaction N-octadecanoyl ethanolamine + H2O = octadecanoate + ethanolamine. The enzyme catalyses N-docosanoyl-ethanolamine + H2O = docosanoate + ethanolamine. The catalysed reaction is N-(15Z-tetracosenoyl)-ethanolamine + H2O = (15Z)-tetracosenoate + ethanolamine. It catalyses the reaction N-hexadecanoylethanolamine + H2O = ethanolamine + hexadecanoate. It carries out the reaction N-(9Z,12Z-octadecadienoyl)-ethanolamine + H2O = ethanolamine + (9Z,12Z)-octadecadienoate. The enzyme catalyses (9Z)-octadecenoate + glycine = N-(9Z-octadecenoyl)glycine + H2O. The catalysed reaction is N-(5Z,8Z,11Z,14Z)-eicosatetraenoyl-glycine + H2O = (5Z,8Z,11Z,14Z)-eicosatetraenoate + glycine. It catalyses the reaction N-(5Z,8Z,11Z,14Z-eicosatetraenoyl)-L-serine + H2O = (5Z,8Z,11Z,14Z)-eicosatetraenoate + L-serine. Its function is as follows. Catalyzes the hydrolysis of endogenous amidated lipids like anandamide (AEA or N-(5Z,8Z,11Z,14Z-eicosatetraenoyl)-ethanolamine) and eicosapentaneoyl ethanolamide (EPEA or (5Z,8Z,11Z,14Z,17Z-eicosapentaenoyl) ethanolamine), as well as other fatty amides, to their corresponding fatty acids, thereby regulating the signaling functions of these molecules. EPEA promotes dauer formation and may constitute a signal of high nutrient availability. Breakdown of EPEA may promote lifespan extension when nutrient availability is high. Facilitates axon regeneration after injury by degradating inhibitory compounds such as AEA. FAAH cooperates with PM20D1 in the hydrolysis of amino acid-conjugated fatty acids such as N-fatty acyl glycine and N-fatty acyl-L-serine, thereby acting as a physiological regulator of specific subsets of intracellular, but not of extracellular, N-fatty acyl amino acids. This Caenorhabditis elegans protein is Fatty acid amide hydrolase 1.